The sequence spans 244 residues: 1-(5-phosphoribosyl)-5-[(5-phosphoribosylamino)methylideneamino] imidazole-4-carboxamide isomerase (244 aa).

Asp-12 serves as the catalytic Proton acceptor. The Proton donor role is filled by Asp-131.

The protein belongs to the HisA/HisF family.

The protein resides in the cytoplasm. It catalyses the reaction 1-(5-phospho-beta-D-ribosyl)-5-[(5-phospho-beta-D-ribosylamino)methylideneamino]imidazole-4-carboxamide = 5-[(5-phospho-1-deoxy-D-ribulos-1-ylimino)methylamino]-1-(5-phospho-beta-D-ribosyl)imidazole-4-carboxamide. The protein operates within amino-acid biosynthesis; L-histidine biosynthesis; L-histidine from 5-phospho-alpha-D-ribose 1-diphosphate: step 4/9. This is 1-(5-phosphoribosyl)-5-[(5-phosphoribosylamino)methylideneamino] imidazole-4-carboxamide isomerase from Nocardioides sp. (strain ATCC BAA-499 / JS614).